The primary structure comprises 398 residues: Glia-derived nexin (398 aa).

A signal peptide spans Met-1–Cys-19. N-linked (GlcNAc...) asparagine glycosylation is found at Asn-118 and Asn-159.

It belongs to the serpin family.

It localises to the secreted. Its subcellular location is the extracellular space. Functionally, serine protease inhibitor with activity toward thrombin, trypsin, and urokinase. Promotes neurite extension by inhibiting thrombin. Binds heparin. The chain is Glia-derived nexin (SERPINE2) from Homo sapiens (Human).